We begin with the raw amino-acid sequence, 695 residues long: Putative ATP-dependent DNA helicase R568 (695 aa).

The region spanning Lys-86–Asn-499 is the UvrD-like helicase ATP-binding domain. Ala-107 to Thr-114 contacts ATP.

Belongs to the helicase family. UvrD subfamily.

The enzyme catalyses Couples ATP hydrolysis with the unwinding of duplex DNA by translocating in the 3'-5' direction.. It catalyses the reaction ATP + H2O = ADP + phosphate + H(+). Its function is as follows. ATP-dependent DNA helicase. This chain is Putative ATP-dependent DNA helicase R568, found in Acanthamoeba polyphaga mimivirus (APMV).